The sequence spans 719 residues: Phosphoribosylformylglycinamidine synthase subunit PurL (719 aa).

His-45 is a catalytic residue. Residues Tyr-48 and Lys-87 each contribute to the ATP site. Glu-89 lines the Mg(2+) pocket. Residues 90 to 93 (SHNH) and Arg-112 each bind substrate. The Proton acceptor role is filled by His-91. Asp-113 provides a ligand contact to Mg(2+). Position 236 (Gln-236) interacts with substrate. Asp-264 contributes to the Mg(2+) binding site. 308–310 (ESQ) is a substrate binding site. ATP is bound by residues Asn-493 and Gly-530. Asn-531 contributes to the Mg(2+) binding site. Substrate is bound at residue Ser-533.

This sequence belongs to the FGAMS family. As to quaternary structure, monomer. Part of the FGAM synthase complex composed of 1 PurL, 1 PurQ and 2 PurS subunits.

Its subcellular location is the cytoplasm. The catalysed reaction is N(2)-formyl-N(1)-(5-phospho-beta-D-ribosyl)glycinamide + L-glutamine + ATP + H2O = 2-formamido-N(1)-(5-O-phospho-beta-D-ribosyl)acetamidine + L-glutamate + ADP + phosphate + H(+). It functions in the pathway purine metabolism; IMP biosynthesis via de novo pathway; 5-amino-1-(5-phospho-D-ribosyl)imidazole from N(2)-formyl-N(1)-(5-phospho-D-ribosyl)glycinamide: step 1/2. Its function is as follows. Part of the phosphoribosylformylglycinamidine synthase complex involved in the purines biosynthetic pathway. Catalyzes the ATP-dependent conversion of formylglycinamide ribonucleotide (FGAR) and glutamine to yield formylglycinamidine ribonucleotide (FGAM) and glutamate. The FGAM synthase complex is composed of three subunits. PurQ produces an ammonia molecule by converting glutamine to glutamate. PurL transfers the ammonia molecule to FGAR to form FGAM in an ATP-dependent manner. PurS interacts with PurQ and PurL and is thought to assist in the transfer of the ammonia molecule from PurQ to PurL. The chain is Phosphoribosylformylglycinamidine synthase subunit PurL from Novosphingobium aromaticivorans (strain ATCC 700278 / DSM 12444 / CCUG 56034 / CIP 105152 / NBRC 16084 / F199).